The following is a 216-amino-acid chain: Thiopurine S-methyltransferase (216 aa).

Positions 10, 45, 66, and 123 each coordinate S-adenosyl-L-methionine.

This sequence belongs to the class I-like SAM-binding methyltransferase superfamily. TPMT family.

The protein resides in the cytoplasm. It carries out the reaction S-adenosyl-L-methionine + a thiopurine = S-adenosyl-L-homocysteine + a thiopurine S-methylether.. The sequence is that of Thiopurine S-methyltransferase from Pseudomonas putida (strain GB-1).